Reading from the N-terminus, the 215-residue chain is Cytochrome b6 (215 aa).

A helical transmembrane segment spans residues 32–52 (LFYCLGGITLTCFLIQVATGF). Cys-35 is a heme c binding site. The heme b site is built by His-86 and His-100. 3 helical membrane-spanning segments follow: residues 90–110 (ASMMVLMMVLHVFRVYLTGGF), 116–136 (STWVTGVIMASCTVSFGVTGY), and 186–206 (LHTFVLPLLTAVFMLGHFLMI). Positions 187 and 202 each coordinate heme b.

It belongs to the cytochrome b family. PetB subfamily. In terms of assembly, the 4 large subunits of the cytochrome b6-f complex are cytochrome b6, subunit IV (17 kDa polypeptide, PetD), cytochrome f and the Rieske protein, while the 4 small subunits are PetG, PetL, PetM and PetN. The complex functions as a dimer. The cofactor is heme b. Requires heme c as cofactor.

The protein localises to the plastid. Its subcellular location is the chloroplast thylakoid membrane. Its function is as follows. Component of the cytochrome b6-f complex, which mediates electron transfer between photosystem II (PSII) and photosystem I (PSI), cyclic electron flow around PSI, and state transitions. The polypeptide is Cytochrome b6 (Bigelowiella natans (Pedinomonas minutissima)).